Here is a 380-residue protein sequence, read N- to C-terminus: Cytochrome b (380 aa).

A run of 4 helical transmembrane segments spans residues 34–54, 78–99, 114–134, and 179–199; these read FGSL…LLAM, WLIR…YLHI, WNTG…GYVL, and FFAL…IHLT. The heme b site is built by His84 and His98. Heme b contacts are provided by His183 and His197. A ubiquinone is bound at residue His202. The next 4 helical transmembrane spans lie at 227 to 247, 289 to 309, 321 to 341, and 348 to 368; these read TKDT…ALFS, LGGV…PLLH, LSQL…WIGS, and FIII…ILFP.

It belongs to the cytochrome b family. As to quaternary structure, the cytochrome bc1 complex contains 11 subunits: 3 respiratory subunits (MT-CYB, CYC1 and UQCRFS1), 2 core proteins (UQCRC1 and UQCRC2) and 6 low-molecular weight proteins (UQCRH/QCR6, UQCRB/QCR7, UQCRQ/QCR8, UQCR10/QCR9, UQCR11/QCR10 and a cleavage product of UQCRFS1). This cytochrome bc1 complex then forms a dimer. It depends on heme b as a cofactor.

Its subcellular location is the mitochondrion inner membrane. Its function is as follows. Component of the ubiquinol-cytochrome c reductase complex (complex III or cytochrome b-c1 complex) that is part of the mitochondrial respiratory chain. The b-c1 complex mediates electron transfer from ubiquinol to cytochrome c. Contributes to the generation of a proton gradient across the mitochondrial membrane that is then used for ATP synthesis. This Aptenodytes patagonicus (King penguin) protein is Cytochrome b (MT-CYB).